A 520-amino-acid chain; its full sequence is NAD(P)H-quinone oxidoreductase subunit 2 (520 aa).

14 helical membrane passes run 15–35 (ILPE…DLIL), 42–62 (WIGY…YFQW), 79–99 (LSII…LMSI), 106–126 (GTAL…GMFV), 132–152 (LVMI…LTGY), 167–187 (LLIG…LYGL), 210–230 (LGAV…ISAA), 244–264 (PTPV…ALAI), 280–300 (FVFT…ALAQ), 306–326 (MLAY…IAGT), 334–354 (IFYL…IILF), 378–398 (LGLS…GFFG), 400–420 (IYLF…LGLV), and 466–486 (VGLV…NPLF).

It belongs to the complex I subunit 2 family. NDH-1 can be composed of about 15 different subunits; different subcomplexes with different compositions have been identified which probably have different functions.

The protein localises to the cellular thylakoid membrane. It catalyses the reaction a plastoquinone + NADH + (n+1) H(+)(in) = a plastoquinol + NAD(+) + n H(+)(out). The enzyme catalyses a plastoquinone + NADPH + (n+1) H(+)(in) = a plastoquinol + NADP(+) + n H(+)(out). NDH-1 shuttles electrons from an unknown electron donor, via FMN and iron-sulfur (Fe-S) centers, to quinones in the respiratory and/or the photosynthetic chain. The immediate electron acceptor for the enzyme in this species is believed to be plastoquinone. Couples the redox reaction to proton translocation, and thus conserves the redox energy in a proton gradient. Cyanobacterial NDH-1 also plays a role in inorganic carbon-concentration. This chain is NAD(P)H-quinone oxidoreductase subunit 2, found in Nostoc sp. (strain PCC 7120 / SAG 25.82 / UTEX 2576).